The sequence spans 288 residues: Oxaloacetate decarboxylase (288 aa).

Ser47 provides a ligand contact to substrate. Mg(2+) is bound at residue Asp85. Residues Arg156 and His232 each contribute to the substrate site.

Belongs to the isocitrate lyase/PEP mutase superfamily. Oxaloacetate decarboxylase family. Homotetramer; dimer of dimers. It depends on Mg(2+) as a cofactor.

The enzyme catalyses oxaloacetate + H(+) = pyruvate + CO2. In terms of biological role, catalyzes the decarboxylation of oxaloacetate into pyruvate. Seems to play a role in maintaining cellular concentrations of bicarbonate and pyruvate. The polypeptide is Oxaloacetate decarboxylase (Bradyrhizobium sp. (strain BTAi1 / ATCC BAA-1182)).